Here is an 836-residue protein sequence, read N- to C-terminus: Neuroligin-2 (836 aa).

Residues Met1–Ala14 form the signal peptide. Topologically, residues Gln15–Ser678 are extracellular. N-linked (GlcNAc...) asparagine glycans are attached at residues Asn98 and Asn136. Disulfide bonds link Cys106-Cys141, Cys317-Cys328, and Cys487-Cys521. Residue Asn522 is glycosylated (N-linked (GlcNAc...) asparagine). Positions Pro623–Arg661 are disordered. A helical membrane pass occupies residues Val679–Tyr699. The segment at Val679 to Tyr699 is required for interaction with LHFPL4. The Cytoplasmic portion of the chain corresponds to Tyr700–Val836. Disordered stretches follow at residues Arg711–Arg735 and Leu791–Val836. Residues Ser714 and Ser719 each carry the phosphoserine modification. Over residues Gly717 to Pro728 the composition is skewed to gly residues. Residues Leu796 to Thr819 are compositionally biased toward pro residues. Residues Asn824–Val836 are compositionally biased toward polar residues.

This sequence belongs to the type-B carboxylesterase/lipase family. In terms of assembly, interacts with neurexins NRXN1, NRXN2 and NRXN3. Interaction with neurexins is mediated by heparan sulfate glycan modification on neurexin. Interacts (via its C-terminus) with DLG4/PSD-95 (via PDZ domain 3). Interacts with PATJ. Interacts with GPHN. Interacts with MDGA1 and MDGA2. Found in a complex with MAGI2 and IGSF9B, where it interacts with MAGI2 (via WW 1, WW 2 and PDZ 2 domains). Identified in a complex of 720 kDa composed of LHFPL4, NLGN2, GABRA1, GABRB2, GABRG2 and GABRB3. Interacts with LHFPL4; leading to mutual regulation of the protein level and synaptic clustering. Interacts with GABRA1. In terms of tissue distribution, detected on hippocampus neurons, especially at inhibitory synapses. Detected in retina, in the outer and inner plexiform layer. Detected in pancreas, in islet of Langerhans beta cells (at protein level). Expressed in brain, spinal cord and dorsal root ganglion. Detected in brain, and at lower levels in pancreas islet beta cells.

It localises to the cell membrane. The protein resides in the postsynaptic cell membrane. It is found in the presynaptic cell membrane. Transmembrane scaffolding protein involved in cell-cell interactions via its interactions with neurexin family members. Mediates cell-cell interactions both in neurons and in other types of cells, such as Langerhans beta cells. Plays a role in synapse function and synaptic signal transmission, especially via gamma-aminobutyric acid receptors (GABA(A) receptors). Functions by recruiting and clustering synaptic proteins. Promotes clustering of postsynaptic GABRG2 and GPHN. Promotes clustering of postsynaptic LHFPL4. Modulates signaling by inhibitory synapses, and thereby plays a role in controlling the ratio of signaling by excitatory and inhibitory synapses and information processing. Required for normal signal amplitude from inhibitory synapses, but is not essential for normal signal frequency. May promote the initial formation of synapses, but is not essential for this. In vitro, triggers the de novo formation of presynaptic structures. Mediates cell-cell interactions between Langerhans beta cells and modulates insulin secretion. The protein is Neuroligin-2 (Nlgn2) of Rattus norvegicus (Rat).